Reading from the N-terminus, the 963-residue chain is Low-density lipoprotein receptor-related protein 8 (963 aa).

An N-terminal signal peptide occupies residues 1–32 (MGLPEPGPLRLLALLLLLLLLLLLQLQHLAAA). The Extracellular portion of the chain corresponds to 42-826 (GPAKDCEKDQ…SKMGSTVTAA (785 aa)). LDL-receptor class A domains lie at 46–82 (DCEKDQFQCRNERCIPSVWRCDEDDDCLDHSDEDDCP), 85–123 (TCADSDFTCDNGHCIHERWKCDGEEECPDGSDESEATCT), 126–164 (VCPAEKLSCGPTSHKCVPASWRCDGEKDCEGGADEAGCA), 166–202 (LCAPHEFQCGNRSCLAAVFVCDGDDDCGDGSDERGCA), 205–246 (ACGP…ELCG), 258–295 (ACATASQFACRSGECVHLGWRCDGDRDCKDKSDEADCP), and 298–334 (TCRGDEFQCGDGTCVLAIKHCNQEQDCPDGSDEAGCL). 27 disulfides stabilise this stretch: Cys-47–Cys-59, Cys-54–Cys-72, Cys-66–Cys-81, Cys-86–Cys-98, Cys-93–Cys-111, Cys-105–Cys-122, Cys-127–Cys-141, Cys-134–Cys-154, Cys-148–Cys-163, Cys-167–Cys-179, Cys-174–Cys-192, Cys-186–Cys-201, Cys-206–Cys-221, Cys-213–Cys-234, Cys-228–Cys-245, Cys-259–Cys-272, Cys-267–Cys-285, Cys-279–Cys-294, Cys-299–Cys-311, Cys-306–Cys-324, Cys-318–Cys-333, Cys-340–Cys-351, Cys-347–Cys-360, Cys-362–Cys-374, Cys-380–Cys-390, Cys-386–Cys-399, and Cys-401–Cys-414. Ca(2+) is bound by residues Trp-64, Asp-67, Asp-69, Asp-71, Asp-77, and Glu-78. N-linked (GlcNAc...) asparagine glycosylation occurs at Asn-176. The 40-residue stretch at 336 to 375 (GLNECLHNNGGCSHICTDLKIGFECTCPAGFQLLDQKTCG) folds into the EGF-like 1 domain. The region spanning 376 to 415 (DIDECKDPDACSQICVNYKGYFKCECYPGYEMDLLTKNCK) is the EGF-like 2; calcium-binding domain. N-linked (GlcNAc...) asparagine glycosylation is present at Asn-441. 5 LDL-receptor class B repeats span residues 462-508 (NRIY…DWVH), 509-551 (KHIY…DPLR), 552-595 (GFMY…DLLS), 596-639 (QRLY…VFED), and 640-681 (KVFW…FHEL). N-linked (GlcNAc...) asparagine glycans are attached at residues Asn-518 and Asn-538. Residues 740–798 (STSTTTLASTMTRTVPATTRAPGTTVHRSTYQNHSTETPSLTAAVPSSVSVPRAPSISP) form a clustered O-linked oligosaccharides region. The segment at 754 to 815 (VPATTRAPGT…SNHSQHYANE (62 aa)) is disordered. Residues 765-777 (VHRSTYQNHSTET) show a composition bias toward polar residues. Asn-772 carries an N-linked (GlcNAc...) asparagine glycan. Over residues 778–799 (PSLTAAVPSSVSVPRAPSISPS) the composition is skewed to low complexity. The segment covering 800 to 812 (TLSPATSNHSQHY) has biased composition (polar residues). The N-linked (GlcNAc...) asparagine glycan is linked to Asn-807. The helical transmembrane segment at 827–847 (VIGIIVPIVVIALLCMSGYLI) threads the bilayer. Residues 848–963 (WRNWKRKNTK…ALSLEDDGLP (116 aa)) are Cytoplasmic-facing.

The protein belongs to the LDLR family. As to quaternary structure, homooligomer. Interacts with VLDLR. Reelin associates with two or more receptor molecules. Interacts with DAB1 and JNK-interacting proteins. Interacts with SNX17. Interacts with PCSK9. Interacts with MDK; this interaction is calcium dependent. Interacts with CLU. In terms of assembly, (Microbial infection) Interacts with Semliki Forest virus E2-E1 heterodimer; this interaction mediates viral entry to host cell. (Microbial infection) Interacts (via class A repeats) with Eastern equine encephalitis virus spike glycoprotein E2; this interaction mediates viral entry into host cell. Post-translationally, O-glycosylated. Some alternatively spliced isoforms lack the O-linked sugar domain. In terms of processing, undergoes sequential, furin and gamma-secretase dependent, proteolytic processing, resulting in the extracellular release of the entire ligand-binding domain as a soluble polypeptide and in the intracellular domain (ICD) release into the cytoplasm. The gamma-secretase-dependent proteolytical processing occurs after the bulk of the extracellular domain has been shed, in a furin-dependent manner, in alternatively spliced isoforms carrying the furin cleavage site. Hypoglycosylation (mainly hypo-O-glycosylation) leads to increased extracellular cleavage, which in turn results in accelerating release of the intracellular domain (ICD) by the gamma-secretase. The resulting receptor fragment is able to inhibit Reelin signaling and in particular the Reelin-induced DAB1 phosphorylation. Tyrosine phosphorylated upon apoE binding. Post-translationally, ubiquitinated by MYLIP leading to degradation. As to expression, expressed mainly in brain and placenta. Also expressed in platelets and megakaryocytic cells. Not expressed in the liver.

Its subcellular location is the cell membrane. The protein localises to the secreted. Functionally, cell surface receptor for Reelin (RELN) and apolipoprotein E (apoE)-containing ligands. LRP8 participates in transmitting the extracellular Reelin signal to intracellular signaling processes, by binding to DAB1 on its cytoplasmic tail. Reelin acts via both the VLDL receptor (VLDLR) and LRP8 to regulate DAB1 tyrosine phosphorylation and microtubule function in neurons. LRP8 has higher affinity for Reelin than VLDLR. LRP8 is thus a key component of the Reelin pathway which governs neuronal layering of the forebrain during embryonic brain development. Binds the endoplasmic reticulum resident receptor-associated protein (RAP). Binds dimers of beta 2-glycoprotein I and may be involved in the suppression of platelet aggregation in the vasculature. Highly expressed in the initial segment of the epididymis, where it affects the functional expression of clusterin and phospholipid hydroperoxide glutathione peroxidase (PHGPx), two proteins required for sperm maturation. May also function as an endocytic receptor. Not required for endocytic uptake of SEPP1 in the kidney which is mediated by LRP2. Together with its ligand, apolipoprotein E (apoE), may indirectly play a role in the suppression of the innate immune response by controlling the survival of myeloid-derived suppressor cells. (Microbial infection) Acts as a receptor for Semliki Forest virus. This chain is Low-density lipoprotein receptor-related protein 8 (LRP8), found in Homo sapiens (Human).